The primary structure comprises 456 residues: ACT domain-containing protein ACR5 (456 aa).

ACT domains are found at residues 39 to 115 (VIKV…FSPS), 130 to 207 (VVEL…SSGR), 271 to 347 (IVMI…VSEG), and 349 to 432 (KLEL…PSPQ).

As to expression, expressed in stems and siliques.

Its function is as follows. May bind amino acids. This Arabidopsis thaliana (Mouse-ear cress) protein is ACT domain-containing protein ACR5.